A 96-amino-acid polypeptide reads, in one-letter code: Small ribosomal subunit protein bS6 (96 aa).

The protein belongs to the bacterial ribosomal protein bS6 family.

Its function is as follows. Binds together with bS18 to 16S ribosomal RNA. This Streptococcus pneumoniae serotype 2 (strain D39 / NCTC 7466) protein is Small ribosomal subunit protein bS6.